The chain runs to 521 residues: DEAD-box ATP-dependent RNA helicase 12 (521 aa).

Residues 1 to 97 form a disordered region; sequence MHHPRARYPP…QQWLRRDQAT (97 aa). The segment covering 13–50 has biased composition (gly residues); it reads TSGGGGGGGGGGGGGRGNGGGGFGGGGGGGGGNHGYYG. Low complexity predominate over residues 51–89; sequence RGPQPQPQQQHYHHQAQQLHQHQQQQQHAQRNSSSQQQQ. Residues 147 to 175 carry the Q motif motif; that stretch reads NEFEDYFLKRELLMGIYEKGFERPSPIQE. Positions 178-348 constitute a Helicase ATP-binding domain; the sequence is IPIALTGSDI…EKYLPRPYVI (171 aa). 191-198 contacts ATP; that stretch reads AKNGTGKT. A DEAD box motif is present at residues 296 to 299; the sequence is DEAD. The 161-residue stretch at 358 to 518 folds into the Helicase C-terminal domain; the sequence is GITQYYAFVE…TIPPQIDLAV (161 aa).

Belongs to the DEAD box helicase family. DDX6/DHH1 subfamily.

It localises to the cytoplasm. The protein resides in the P-body. The enzyme catalyses ATP + H2O = ADP + phosphate + H(+). In terms of biological role, ATP-dependent RNA helicase involved in mRNA turnover, and more specifically in mRNA decapping. The polypeptide is DEAD-box ATP-dependent RNA helicase 12 (Oryza sativa subsp. japonica (Rice)).